The sequence spans 348 residues: Major outer membrane protein P.IB (348 aa).

An N-terminal signal peptide occupies residues 1 to 19; that stretch reads MKKSLIALTLAALPVAAMA.

It belongs to the Gram-negative porin family. Homotrimer.

The protein localises to the cell outer membrane. Serves as a slightly cation selective porin. Major antigen on the gonococcal cell surface and it may have pathogenic properties in addition to its porin activity. In Neisseria gonorrhoeae, this protein is Major outer membrane protein P.IB (porB).